The primary structure comprises 185 residues: MTEETTVSKKRWYVLQAFSGFESRVALTLREYIKQQQMEDQFGEVLVPTEEVVENVAGKRRKSERKFFPGYVLVEMEMNDETWHLVKSVPRVMGFIGGTPDKPAPISKREADTILNRLEQNTDKPRHRNEYHPGEEVRVTEGPFADFNGTVEEVDYEKGRLKVSVSMFGRATPVELEFGQVEKIH.

The KOW domain maps to 133–161 (PGEEVRVTEGPFADFNGTVEEVDYEKGRL).

This sequence belongs to the NusG family.

Participates in transcription elongation, termination and antitermination. The polypeptide is Transcription termination/antitermination protein NusG (Haemophilus influenzae (strain ATCC 51907 / DSM 11121 / KW20 / Rd)).